The primary structure comprises 114 residues: Iron-sulfur cluster assembly protein CyaY (114 aa).

It belongs to the frataxin family.

Functionally, involved in iron-sulfur (Fe-S) cluster assembly. May act as a regulator of Fe-S biogenesis. The polypeptide is Iron-sulfur cluster assembly protein CyaY (Ralstonia pickettii (strain 12J)).